The primary structure comprises 117 residues: UPF0145 protein PH1682 (117 aa).

The protein belongs to the UPF0145 family.

In Pyrococcus horikoshii (strain ATCC 700860 / DSM 12428 / JCM 9974 / NBRC 100139 / OT-3), this protein is UPF0145 protein PH1682.